The chain runs to 216 residues: U1 small nuclear ribonucleoprotein A (216 aa).

RRM domains lie at 7-86 (QTIY…YSKS) and 142-216 (QILF…FAKK). The segment at 97-142 (TFKERPKKVKPPKPAPGTDEKKDKKKKPSSAENSNPNAQTEQPPNQ) is disordered. Over residues 126–142 (SAENSNPNAQTEQPPNQ) the composition is skewed to polar residues.

Belongs to the RRM U1 A/B'' family. As to quaternary structure, belongs to the spliceosome where it is associated with snRNP U1. Interacts with the SMN complex.

Its subcellular location is the nucleus. Functionally, binds stem loop II of U1 snRNA. It is the first snRNP to interact with pre-mRNA. This interaction is required for the subsequent binding of U2 snRNP and the U4/U6/U5 tri-snRNP. Plays a role in regulating sex-lethal splicing. The chain is U1 small nuclear ribonucleoprotein A (snf) from Drosophila melanogaster (Fruit fly).